Here is a 180-residue protein sequence, read N- to C-terminus: Nucleoside triphosphate/diphosphate phosphatase (180 aa).

Arg-26 serves as the catalytic Proton donor. The Mg(2+) site is built by Asn-90, Asp-106, Asp-108, Asp-110, Asp-123, and Glu-126.

This sequence belongs to the Ntdp family. The cofactor is Mg(2+).

It catalyses the reaction a ribonucleoside 5'-triphosphate + H2O = a ribonucleoside 5'-diphosphate + phosphate + H(+). The enzyme catalyses a ribonucleoside 5'-diphosphate + H2O = a ribonucleoside 5'-phosphate + phosphate + H(+). In terms of biological role, has nucleoside phosphatase activity towards nucleoside triphosphates and nucleoside diphosphates. This is Nucleoside triphosphate/diphosphate phosphatase from Staphylococcus haemolyticus (strain JCSC1435).